A 612-amino-acid polypeptide reads, in one-letter code: UvrABC system protein C (612 aa).

The 79-residue stretch at 20–98 folds into the GIY-YIG domain; the sequence is THSGVYRMLD…IKQHRPKYNI (79 aa). The UVR domain maps to 208 to 243; it reads SSVLEEISAKMYQASEDMEYEKAQVYRDQLVVLRKL.

It belongs to the UvrC family. As to quaternary structure, interacts with UvrB in an incision complex.

The protein resides in the cytoplasm. Its function is as follows. The UvrABC repair system catalyzes the recognition and processing of DNA lesions. UvrC both incises the 5' and 3' sides of the lesion. The N-terminal half is responsible for the 3' incision and the C-terminal half is responsible for the 5' incision. The protein is UvrABC system protein C of Francisella tularensis subsp. mediasiatica (strain FSC147).